The primary structure comprises 734 residues: DNA replication licensing factor MCM5 (734 aa).

An N-acetylserine modification is found at S2. The residue at position 315 (S315) is a Phosphoserine. The region spanning 331 to 537 (VYEVISKSIA…RDVMLAKHVI (207 aa)) is the MCM domain. ADP is bound at residue R371. K392 and K396 each carry N6-acetyllysine. S605 bears the Phosphoserine mark. K696 carries the N6-acetyllysine modification.

It belongs to the MCM family. In terms of assembly, component of the MCM2-7 complex. The complex forms a toroidal hexameric ring with the proposed subunit order MCM2-MCM6-MCM4-MCM7-MCM3-MCM5. Component of the CMG helicase complex, a hexameric ring of related MCM2-7 subunits stabilized by CDC45 and the tetrameric GINS complex. Interacts with ANKRD17. Interacts with MCMBP. Interacts with TONSL; the interaction is direct.

Its subcellular location is the nucleus. It is found in the chromosome. The catalysed reaction is ATP + H2O = ADP + phosphate + H(+). Functionally, acts as a component of the MCM2-7 complex (MCM complex) which is the replicative helicase essential for 'once per cell cycle' DNA replication initiation and elongation in eukaryotic cells. Core component of CDC45-MCM-GINS (CMG) helicase, the molecular machine that unwinds template DNA during replication, and around which the replisome is built. The active ATPase sites in the MCM2-7 ring are formed through the interaction surfaces of two neighboring subunits such that a critical structure of a conserved arginine finger motif is provided in trans relative to the ATP-binding site of the Walker A box of the adjacent subunit. The six ATPase active sites, however, are likely to contribute differentially to the complex helicase activity. This Homo sapiens (Human) protein is DNA replication licensing factor MCM5 (MCM5).